Here is a 490-residue protein sequence, read N- to C-terminus: MADTLRRLVNSSPYSVLQDKLDAWYKDYHVYSCDQNLNRCCELVELTSKIQGQLFTILNLTAQEGGHYSGVDTLKSRLLPWLGSCFTIAASAVSSDTSLSLIQESVEKDRKIRELSSVHESNLQKIEDQLCSTRIELDSVKRELVDTHIELDSTKNKSATTLLATEDEILHLKSELRVAQDQLDLYKRKLDVLDDYERQVRILRDEVSFLNAEKTVLQDRLARSRSPSPLLRRSRSVSPVRGESPTRAQLTSSSRHARLVSRFSDLYATERLESQSLLLKYIDDLETVQRILFIAAVESFQAAKLAYRQFKSRVRKTLSSTHIGPESLEDAVVDYIVRNLDLYDVQTSINDVINAMNVNPRISFPPEVDFVLISSFIREACRIAFAMQTLDPPLDLAFSSDGELYSDVKYRRSFDSEFTAPLVAFHVWPALLEGDTVILKGEAVTRRGALWKSRSRSSSPVRSRSGSPSRTFMASHSRSPSPGRLSSSRL.

The stretch at 112–210 (IRELSSVHES…RILRDEVSFL (99 aa)) forms a coiled coil. 2 stretches are compositionally biased toward low complexity: residues 224–241 (SRSP…SPVR) and 456–490 (RSSS…SSRL). Disordered stretches follow at residues 224–253 (SRSP…LTSS) and 455–490 (SRSS…SSRL).

The protein belongs to the MIEAP family.

It localises to the cytoplasm. Its subcellular location is the mitochondrion outer membrane. The protein localises to the mitochondrion matrix. Its function is as follows. Key regulator of mitochondrial quality that mediates the repairing or degradation of unhealthy mitochondria in response to mitochondrial damage. Mediator of mitochondrial protein catabolic process (also named MALM) by mediating the degradation of damaged proteins inside mitochondria by promoting the accumulation in the mitochondrial matrix of hydrolases that are characteristic of the lysosomal lumen. Also involved in mitochondrion degradation of damaged mitochondria by promoting the formation of vacuole-like structures (named MIV), which engulf and degrade unhealthy mitochondria by accumulating lysosomes. Binds cardiolipin. May form molecular condensates (non-membrane-bounded organelles) within mitochondria that compartmentalize and promote cardiolipin metabolism. In Danio rerio (Zebrafish), this protein is Mitochondria-eating protein (spata18).